The chain runs to 93 residues: Small ribosomal subunit protein uS19 (93 aa).

This sequence belongs to the universal ribosomal protein uS19 family.

In terms of biological role, protein S19 forms a complex with S13 that binds strongly to the 16S ribosomal RNA. The sequence is that of Small ribosomal subunit protein uS19 from Clostridioides difficile (strain 630) (Peptoclostridium difficile).